A 205-amino-acid chain; its full sequence is Protein phosphatase inhibitor 2 (205 aa).

Residues 1–44 (MAASTASHRPIKGILKNKTSTTSSVVASAEQPRRTVEEELSKKS) form a disordered region. Alanine 2 carries the post-translational modification N-acetylalanine. The required for binding PPP1CC stretch occupies residues 12-17 (KGILKN). Residues 19 to 29 (TSTTSSVVASA) show a composition bias toward low complexity. Positions 31–44 (QPRRTVEEELSKKS) are enriched in basic and acidic residues. The segment at 43-55 (KSQKWDEMNILAT) is required for binding PPP1CC. Serine 44 is modified (phosphoserine; by ATM). Threonine 73 carries the post-translational modification Phosphothreonine; by GSK3. A phosphoserine mark is found at serine 87 and serine 89. A phosphothreonine mark is found at threonine 96 and threonine 116. Residues 104–142 (LAAAEGSEPKFRTREQESSGEEDNDLSPEEREKKRQFEM) are disordered. The segment covering 110 to 120 (SEPKFRTREQE) has biased composition (basic and acidic residues). Phosphoserine is present on residues serine 121, serine 122, and serine 130. Positions 121–130 (SSGEEDNDLS) are enriched in acidic residues. A compositionally biased stretch (basic and acidic residues) spans 131–142 (PEEREKKRQFEM). Residues 147 to 150 (HYNE) are required for binding PPP1CC catalytic center, displacing metal ions and inhibition of PPP1CC catalytic activity. The interval 163–205 (KDLHDDDEDEEMSETADADSMNIEESNQGSTAGDHLQHKSQSS) is disordered. Acidic residues predominate over residues 167–179 (DDDEDEEMSETAD).

This sequence belongs to the protein phosphatase inhibitor 2 family. Heterodimer with PP1. Post-translationally, phosphorylation on Ser-44 by ATM activates PP1 by dissociating the PP1-PPP1R2 complex. Phosphorylation on Thr-73 by GSK3 activates PP1 by dissociating the PP1-PPP1R2 complex. As to expression, central nervous system.

Its function is as follows. Inhibitor of protein-phosphatase 1. The chain is Protein phosphatase inhibitor 2 (Ppp1r2) from Rattus norvegicus (Rat).